An 833-amino-acid chain; its full sequence is Lon protease (833 aa).

One can recognise a Lon N-terminal domain in the interval 3-198 (YPFMATRGVI…LIFSFLVELK (196 aa)). Residue 390-397 (GPPGTGKT) participates in ATP binding. Positions 627-808 (YERIGAVNGL…DEIFENLFGK (182 aa)) constitute a Lon proteolytic domain. Catalysis depends on residues Ser714 and Lys757.

This sequence belongs to the peptidase S16 family. In terms of assembly, homohexamer. Organized in a ring with a central cavity.

The protein resides in the cytoplasm. The enzyme catalyses Hydrolysis of proteins in presence of ATP.. Functionally, ATP-dependent serine protease that mediates the selective degradation of mutant and abnormal proteins as well as certain short-lived regulatory proteins. Required for cellular homeostasis and for survival from DNA damage and developmental changes induced by stress. Degrades polypeptides processively to yield small peptide fragments that are 5 to 10 amino acids long. Binds to DNA in a double-stranded, site-specific manner. The protein is Lon protease of Mycoplasma mobile (strain ATCC 43663 / 163K / NCTC 11711) (Mesomycoplasma mobile).